The sequence spans 201 residues: MATSHSLKAETRACGSGNLKQLRSQGLVPGVVYGPGFDNVNIQVDAREFARMLASAVSEHILVALDINGKIVKVLLKEVQHNPITNACLHVDFQAVTDTTVIHSIVPVILEGDSAGVALGGVLDQTIHELAIICQVKDLPEAITADISGLKLGESLRITDLKLPSGVTTELAGDVIVAIVEAPRVSGEEAAPAAEEAVAEK.

This sequence belongs to the bacterial ribosomal protein bL25 family. CTC subfamily. As to quaternary structure, part of the 50S ribosomal subunit; part of the 5S rRNA/L5/L18/L25 subcomplex. Contacts the 5S rRNA. Binds to the 5S rRNA independently of L5 and L18.

Functionally, this is one of the proteins that binds to the 5S RNA in the ribosome where it forms part of the central protuberance. This is Large ribosomal subunit protein bL25 from Akkermansia muciniphila (strain ATCC BAA-835 / DSM 22959 / JCM 33894 / BCRC 81048 / CCUG 64013 / CIP 107961 / Muc).